Here is a 274-residue protein sequence, read N- to C-terminus: MDLFMRFFTLGSITAQPVKIDNASPASTVHATATIPLQASLPFGWLVIGVAFLAVFQSATKIIALNKRWQLALYKGFQFICNLLLLFVTIYSHLLLVAAGMEAQFLYLYALIYFLQCINACRIIMRCWLCWKCKSKNPLLYDANYFVCWHTHNYDYCIPYNSVTDTIVVTEGDGISTPKLKEDYQIGGYSEDRHSGVKDYVVVHGYFTEVYYQLESTQITTDTGIENATFFIFNKLVKDPPNVQIHTIDGSSGVANPAMDPIYDEPTTTTSVPL.

The Extracellular segment spans residues 1–34 (MDLFMRFFTLGSITAQPVKIDNASPASTVHATAT). S27 carries an O-linked (GalNAc...) serine; by host glycan. T28, T32, and T34 each carry an O-linked (GalNAc...) threonine; by host glycan. Residues 33-141 (ATIPLQASLP…KCKSKNPLLY (109 aa)) form the CoV 3a-like viroporin TM domain. A helical transmembrane segment spans residues 35–55 (IPLQASLPFGWLVIGVAFLAV). At 56–78 (FQSATKIIALNKRWQLALYKGFQ) the chain is on the cytoplasmic side. Residues 79–99 (FICNLLLLFVTIYSHLLLVAA) traverse the membrane as a helical segment. At 100–104 (GMEAQ) the chain is on the extracellular side. The chain crosses the membrane as a helical span at residues 105–125 (FLYLYALIYFLQCINACRIIM). Residues 126 to 274 (RCWLCWKCKS…EPTTTTSVPL (149 aa)) are Cytoplasmic-facing. The 93-residue stretch at 145-237 (YFVCWHTHNY…ATFFIFNKLV (93 aa)) folds into the CoV 3a-like viroporin CD domain.

As to quaternary structure, homotetramer composed of two homodimers linked non covalently. Interacts with M, S and E proteins. Also interacts with the accessory protein 7a. Post-translationally, exists in both O-glycosylated and non-glycosylated forms. The glycosylated form is associated with the virion.

The protein resides in the virion. It is found in the host Golgi apparatus membrane. Its subcellular location is the host cell membrane. The protein localises to the secreted. It localises to the host cytoplasm. Its function is as follows. Forms homotetrameric potassium sensitive ion channels (viroporin) and may modulate virus release. Up-regulates expression of fibrinogen subunits FGA, FGB and FGG in host lung epithelial cells. Induces apoptosis in cell culture. Down-regulates the type 1 interferon receptor by inducing serine phosphorylation within the IFN alpha-receptor subunit 1 (IFNAR1) degradation motif and increasing IFNAR1 ubiquitination. The protein is ORF3a protein of Homo sapiens (Human).